A 141-amino-acid chain; its full sequence is Small ribosomal subunit protein bS6 (141 aa).

The disordered stretch occupies residues 96 to 141 (VTGPSEMLKAEENRSERRERRERPEHADGAEGDDSNDSDNSDNADE). Over residues 103-124 (LKAEENRSERRERRERPEHADG) the composition is skewed to basic and acidic residues. The segment covering 125–141 (AEGDDSNDSDNSDNADE) has biased composition (acidic residues).

The protein belongs to the bacterial ribosomal protein bS6 family.

Functionally, binds together with bS18 to 16S ribosomal RNA. This is Small ribosomal subunit protein bS6 from Pseudomonas entomophila (strain L48).